Reading from the N-terminus, the 150-residue chain is C-type lectin 37Db (150 aa).

Residues 1–20 form the signal peptide; the sequence is MMVKLLLLFLVCWSALPLES. Residues 31–148 enclose the C-type lectin domain; that stretch reads IGEKQYYISL…CYSSVAFICQ (118 aa). Cystine bridges form between Cys52–Cys147 and Cys122–Cys139. Asn107 and Asn115 each carry an N-linked (GlcNAc...) asparagine glycan.

It localises to the secreted. Functionally, galactose-specific lectin that displays calcium-dependent activity. Binds to the surface of hemocytes and enhances hemocyte encapsulation and melanization. This is likely by interacting with carbohydrates on the surface of the hemocytes. Also displays agglutination activity against the Gram-negative bacterium E.coli. This chain is C-type lectin 37Db, found in Drosophila melanogaster (Fruit fly).